We begin with the raw amino-acid sequence, 97 residues long: Protein 9b (97 aa).

Positions 8–97 (VPPALHLVDP…PDEFVVVTAK (90 aa)) constitute a 9b domain.

As to quaternary structure, homodimer.

Its subcellular location is the host cytoplasmic vesicle membrane. It is found in the host cytoplasm. The chain is Protein 9b from Bat coronavirus 279/2005 (BtCoV).